A 67-amino-acid chain; its full sequence is Sporulation protein 24 (67 aa).

2 positions are modified to phosphoserine: S24 and S32.

Phosphorylated during meiosis. During meiosis, exists in both unphosphorylated and phosphorylated forms with the highest degree of phosphorylation occurring in mid-meiosis.

Its subcellular location is the prospore membrane. Functionally, required for efficient sporulation. The protein is Sporulation protein 24 of Saccharomyces cerevisiae (strain ATCC 204508 / S288c) (Baker's yeast).